The chain runs to 312 residues: Nucleosome assembly protein 1-like 4 (312 aa).

Positions 24-78 (VETLKNKLQALAEQHVDVLESLAPSVRKRVDVLMEIQSQHDELEVKFFEEKAALE) form a coiled coil. The Nuclear export signal motif lies at 45–60 (LAPSVRKRVDVLMEIQ). Positions 289 to 312 (DYGASWVDDEEEDDNNDEYSDEEA) are disordered.

Belongs to the nucleosome assembly protein (NAP) family.

The protein localises to the nucleus. The protein resides in the cytoplasm. May modulate chromatin structure by regulation of nucleosome assembly/disassembly. The chain is Nucleosome assembly protein 1-like 4 from Oryza sativa subsp. japonica (Rice).